The primary structure comprises 308 residues: Ribosome maturation factor RimP (308 aa).

3 disordered regions span residues 1–31 (MARA…AADA), 94–113 (EDIG…AAGG), and 249–308 (DLDE…EMNR). Residues 17 to 31 (APSRRTGGARAAADA) are compositionally biased toward low complexity. Over residues 99–113 (DGAGGTGGSGGAAGG) the composition is skewed to gly residues. Residues 249–269 (DLDEGLEDDDGLEDEDDEDEY) are compositionally biased toward acidic residues.

Belongs to the RimP family.

It localises to the cytoplasm. In terms of biological role, required for maturation of 30S ribosomal subunits. The chain is Ribosome maturation factor RimP from Parafrankia sp. (strain EAN1pec).